A 370-amino-acid polypeptide reads, in one-letter code: Aminomethyltransferase (370 aa).

The protein belongs to the GcvT family. As to quaternary structure, the glycine cleavage system is composed of four proteins: P, T, L and H.

It carries out the reaction N(6)-[(R)-S(8)-aminomethyldihydrolipoyl]-L-lysyl-[protein] + (6S)-5,6,7,8-tetrahydrofolate = N(6)-[(R)-dihydrolipoyl]-L-lysyl-[protein] + (6R)-5,10-methylene-5,6,7,8-tetrahydrofolate + NH4(+). In terms of biological role, the glycine cleavage system catalyzes the degradation of glycine. The polypeptide is Aminomethyltransferase (Prochlorococcus marinus (strain MIT 9515)).